Consider the following 329-residue polypeptide: Tryptophan--tRNA ligase (329 aa).

ATP contacts are provided by residues Q9–S11 and G17–N18. Positions P10–N18 match the 'HIGH' region motif. D133 serves as a coordination point for L-tryptophan. ATP-binding positions include G145–D147, V184, and K193–S197. The 'KMSKS' region signature appears at K193–S197.

It belongs to the class-I aminoacyl-tRNA synthetase family. Homodimer.

Its subcellular location is the cytoplasm. The catalysed reaction is tRNA(Trp) + L-tryptophan + ATP = L-tryptophyl-tRNA(Trp) + AMP + diphosphate + H(+). Catalyzes the attachment of tryptophan to tRNA(Trp). The chain is Tryptophan--tRNA ligase from Staphylococcus aureus (strain MSSA476).